A 238-amino-acid chain; its full sequence is MSASVSKVVVVFSGGQDSTTCLIQALTQYDEVHGITFDYGQRHREEIDVAKSLAQRLNITSHKVMDVSLLNELAISALTRDAIPVSHELMENGLPNTFVPGRNILFLTLAGIYAYQLGAEAIITGVCETDFSGYPDCRHDFVRAMESALVQGMDKKLNIITPLMWLNKAQTWALADKYQQLDLVRHHTLTCYNGIVGDGCGDCPACHLRQRGLDDYLQNKSAVMASLTQAIETGKPQA.

Residue 12–22 participates in ATP binding; the sequence is FSGGQDSTTCL. Cysteine 191, cysteine 200, cysteine 203, and cysteine 206 together coordinate Zn(2+).

This sequence belongs to the QueC family. Zn(2+) is required as a cofactor.

It carries out the reaction 7-carboxy-7-deazaguanine + NH4(+) + ATP = 7-cyano-7-deazaguanine + ADP + phosphate + H2O + H(+). The protein operates within purine metabolism; 7-cyano-7-deazaguanine biosynthesis. Its function is as follows. Catalyzes the ATP-dependent conversion of 7-carboxy-7-deazaguanine (CDG) to 7-cyano-7-deazaguanine (preQ(0)). This Shewanella oneidensis (strain ATCC 700550 / JCM 31522 / CIP 106686 / LMG 19005 / NCIMB 14063 / MR-1) protein is 7-cyano-7-deazaguanine synthase.